The following is a 579-amino-acid chain: Arginine--tRNA ligase (579 aa).

The short motif at 123-133 (PNLAKEMHVGH) is the 'HIGH' region element.

Belongs to the class-I aminoacyl-tRNA synthetase family. Monomer.

The protein localises to the cytoplasm. It catalyses the reaction tRNA(Arg) + L-arginine + ATP = L-arginyl-tRNA(Arg) + AMP + diphosphate. The protein is Arginine--tRNA ligase of Saccharophagus degradans (strain 2-40 / ATCC 43961 / DSM 17024).